Consider the following 616-residue polypeptide: TAF6-like RNA polymerase II p300/CBP-associated factor-associated factor 65 kDa subunit 6L (616 aa).

Disordered stretches follow at residues 399-432 (SLLLQESPPGGSSETGFGSGLPPPSGVAGPEDPS) and 455-539 (FGTG…GTRD). Phosphoserine occurs at positions 494 and 500. Residues Arg549, Arg555, and Arg587 each carry the asymmetric dimethylarginine modification.

This sequence belongs to the TAF6 family. As to quaternary structure, the PCAF complex is composed of a number of TBP-associated factors (TAFS), such as TAF5, TAF5L, TAF6, TAF6L, TAF9, TAF10 and TAF12, PCAF, and also PCAF-associated factors (PAFs), such as TADA2L/ADA2, TADA3L/ADA3 and SPT3. Component of the STAGA transcription coactivator-HAT complex, at least composed of SUPT3H, GCN5L2, TAF5L, TAF6L, SUPT7L, TADA3L, TAD1L, TAF10, TAF12, TRRAP and TAF9.

Its subcellular location is the nucleus. Its function is as follows. Functions as a component of the PCAF complex. The PCAF complex is capable of efficiently acetylating histones in a nucleosomal context. The PCAF complex could be considered as the human version of the yeast SAGA complex. With TAF5L, acts as an epigenetic regulator essential for somatic reprogramming. Regulates target genes through H3K9ac deposition and MYC recruitment which trigger MYC regulatory network to orchestrate gene expression programs to control embryonic stem cell state. Functions with MYC to activate target gene expression through RNA polymerase II pause release. The protein is TAF6-like RNA polymerase II p300/CBP-associated factor-associated factor 65 kDa subunit 6L of Mus musculus (Mouse).